A 156-amino-acid chain; its full sequence is MAENPIYGPFFGVMGAASAIIFSALGAAYGTAKSGTGIAAMSVMRPELIMKSIIPVVMAGIIAIYGLVVAVLIAGSLDAPSNNYTLYKGFIHLGAGLAVGFSGLAAGFAIGIVGDAGVRGTAQQPRLFVGMILILIFAEVLGLYGLIVAIYLYTKQ.

At 1–7 the chain is on the lumenal side; that stretch reads MAENPIY. A helical transmembrane segment spans residues 8–30; that stretch reads GPFFGVMGAASAIIFSALGAAYG. Residues 31-52 are Cytoplasmic-facing; sequence TAKSGTGIAAMSVMRPELIMKS. A helical transmembrane segment spans residues 53–73; the sequence is IIPVVMAGIIAIYGLVVAVLI. Over 74-92 the chain is Lumenal; the sequence is AGSLDAPSNNYTLYKGFIH. A helical transmembrane segment spans residues 93–114; it reads LGAGLAVGFSGLAAGFAIGIVG. Residues 115-126 lie on the Cytoplasmic side of the membrane; the sequence is DAGVRGTAQQPR. A helical transmembrane segment spans residues 127-152; the sequence is LFVGMILILIFAEVLGLYGLIVAIYL. At 153-156 the chain is on the lumenal side; the sequence is YTKQ.

It belongs to the V-ATPase proteolipid subunit family. In terms of assembly, V-ATPase is a heteromultimeric enzyme made up of two complexes: the ATP-hydrolytic V1 complex and the proton translocation V0 complex. The V1 complex consists of three catalytic AB heterodimers that form a heterohexamer, three peripheral stalks each consisting of EG heterodimers, one central rotor including subunits D and F, and the regulatory subunits C and H. The proton translocation complex V0 consists of the proton transport subunit a, a ring of proteolipid subunits c9c'', rotary subunit d, subunits e and f, and the accessory subunits VhaAC45 and ATP6AP2.

The protein resides in the membrane. Proton-conducting pore forming subunit of the V0 complex of vacuolar(H+)-ATPase (V-ATPase), a multisubunit enzyme composed of a peripheral complex (V1) that hydrolyzes ATP and a membrane integral complex (V0) that translocates protons. V-ATPase is responsible for acidifying and maintaining the pH of intracellular compartments and in some cell types, is targeted to the plasma membrane, where it is responsible for acidifying the extracellular environment. The protein is V-type proton ATPase 16 kDa proteolipid subunit c (VHA16) of Heliothis virescens (Tobacco budworm moth).